Consider the following 552-residue polypeptide: CTP synthase (552 aa).

The interval 1–265 is amidoligase domain; sequence MTKFVFVTGG…DRIVCEKLAL (265 aa). Residue Ser-13 coordinates CTP. Residue Ser-13 participates in UTP binding. ATP contacts are provided by residues 14–19 and Asp-71; that span reads SLGKGI. 2 residues coordinate Mg(2+): Asp-71 and Glu-139. CTP is bound by residues 146-148, 186-191, and Lys-222; these read DIE and KTKPTQ. UTP contacts are provided by residues 186-191 and Lys-222; that span reads KTKPTQ. A Glutamine amidotransferase type-1 domain is found at 290-545; the sequence is TIGMVGKYVD…IKAALAHKQA (256 aa). Residue Gly-351 participates in L-glutamine binding. Catalysis depends on Cys-378, which acts as the Nucleophile; for glutamine hydrolysis. L-glutamine is bound by residues 379-382, Glu-402, and Arg-468; that span reads LGMQ. Active-site residues include His-518 and Glu-520.

It belongs to the CTP synthase family. As to quaternary structure, homotetramer.

The enzyme catalyses UTP + L-glutamine + ATP + H2O = CTP + L-glutamate + ADP + phosphate + 2 H(+). It catalyses the reaction L-glutamine + H2O = L-glutamate + NH4(+). It carries out the reaction UTP + NH4(+) + ATP = CTP + ADP + phosphate + 2 H(+). Its pathway is pyrimidine metabolism; CTP biosynthesis via de novo pathway; CTP from UDP: step 2/2. Allosterically activated by GTP, when glutamine is the substrate; GTP has no effect on the reaction when ammonia is the substrate. The allosteric effector GTP functions by stabilizing the protein conformation that binds the tetrahedral intermediate(s) formed during glutamine hydrolysis. Inhibited by the product CTP, via allosteric rather than competitive inhibition. In terms of biological role, catalyzes the ATP-dependent amination of UTP to CTP with either L-glutamine or ammonia as the source of nitrogen. Regulates intracellular CTP levels through interactions with the four ribonucleotide triphosphates. This is CTP synthase from Herminiimonas arsenicoxydans.